Here is a 269-residue protein sequence, read N- to C-terminus: MEMO1 family protein TV1383 (269 aa).

Belongs to the MEMO1 family.

The chain is MEMO1 family protein TV1383 from Thermoplasma volcanium (strain ATCC 51530 / DSM 4299 / JCM 9571 / NBRC 15438 / GSS1).